The following is a 304-amino-acid chain: N-carbamoyl-D-amino acid hydrolase (304 aa).

The region spanning 5–276 is the CN hydrolase domain; the sequence is MILAVGQQGP…DEVITAAVDL (272 aa). Catalysis depends on residues E47, K127, and C172.

It carries out the reaction an N-carbamoyl-D-amino acid + H2O + 2 H(+) = a D-alpha-amino acid + NH4(+) + CO2. The enzyme catalyzes the hydrolysis of N-carbamoyl-D-amino acids to the corresponding which are useful intermediates in the preparation of beta-lactam antibiotics. Industrial production of beta-lactam antibiotics is now being developed using this enzyme. The polypeptide is N-carbamoyl-D-amino acid hydrolase (Agrobacterium sp. (strain KNK712)).